The primary structure comprises 443 residues: Xaa-Pro dipeptidase (443 aa).

Mn(2+) is bound by residues D246, D257, H339, E384, and E423.

This sequence belongs to the peptidase M24B family. Bacterial-type prolidase subfamily. Mn(2+) is required as a cofactor.

It carries out the reaction Xaa-L-Pro dipeptide + H2O = an L-alpha-amino acid + L-proline. Splits dipeptides with a prolyl residue in the C-terminal position. This chain is Xaa-Pro dipeptidase, found in Shigella flexneri serotype 5b (strain 8401).